The following is a 172-amino-acid chain: Translationally-controlled tumor protein homolog (172 aa).

Residues 1 to 172 (MIIFKDLLTG…FKHGLDEEKV (172 aa)) form the TCTP domain.

The protein belongs to the TCTP family. As to expression, expressed by the venom gland.

The protein resides in the secreted. Venom protein that causes edema, enhances vascular permeability and is likely related to the inflammatory activity of the venom. This chain is Translationally-controlled tumor protein homolog, found in Loxosceles intermedia (Brown spider).